A 194-amino-acid chain; its full sequence is Peptidyl-tRNA hydrolase (194 aa).

Position 16 (Tyr-16) interacts with tRNA. Residue His-21 is the Proton acceptor of the active site. The tRNA site is built by Phe-67, Asn-69, and Asn-115.

Belongs to the PTH family. As to quaternary structure, monomer.

It localises to the cytoplasm. The enzyme catalyses an N-acyl-L-alpha-aminoacyl-tRNA + H2O = an N-acyl-L-amino acid + a tRNA + H(+). Its function is as follows. Hydrolyzes ribosome-free peptidyl-tRNAs (with 1 or more amino acids incorporated), which drop off the ribosome during protein synthesis, or as a result of ribosome stalling. Catalyzes the release of premature peptidyl moieties from peptidyl-tRNA molecules trapped in stalled 50S ribosomal subunits, and thus maintains levels of free tRNAs and 50S ribosomes. The protein is Peptidyl-tRNA hydrolase of Salmonella dublin (strain CT_02021853).